Consider the following 120-residue polypeptide: Glycine cleavage system H protein (120 aa).

Residues 17 to 99 enclose the Lipoyl-binding domain; that stretch reads VATVGITNYA…QGAGWFFKLK (83 aa). At Lys58 the chain carries N6-lipoyllysine.

Belongs to the GcvH family. In terms of assembly, the glycine cleavage system is composed of four proteins: P, T, L and H. (R)-lipoate serves as cofactor.

Functionally, the glycine cleavage system catalyzes the degradation of glycine. The H protein shuttles the methylamine group of glycine from the P protein to the T protein. This Rhizobium etli (strain ATCC 51251 / DSM 11541 / JCM 21823 / NBRC 15573 / CFN 42) protein is Glycine cleavage system H protein.